Consider the following 551-residue polypeptide: Arginine--tRNA ligase (551 aa).

Residues 125–135 (ANPTGPLHIGH) carry the 'HIGH' region motif.

This sequence belongs to the class-I aminoacyl-tRNA synthetase family. In terms of assembly, monomer.

The protein localises to the cytoplasm. It catalyses the reaction tRNA(Arg) + L-arginine + ATP = L-arginyl-tRNA(Arg) + AMP + diphosphate. The chain is Arginine--tRNA ligase from Nitratidesulfovibrio vulgaris (strain DP4) (Desulfovibrio vulgaris).